A 306-amino-acid polypeptide reads, in one-letter code: Deoxyribokinase (306 aa).

Substrate is bound by residues 10 to 12, 38 to 42, and E139; these read MVD and GKGAN. ATP contacts are provided by residues N184 and 220–225; that span reads TMGEKG. K(+) is bound by residues D246 and S248. Residue 251–252 coordinates ATP; that stretch reads GD. D252 is a binding site for substrate. Catalysis depends on D252, which acts as the Proton acceptor. K(+) contacts are provided by S282, G285, G287, and S291.

The protein belongs to the carbohydrate kinase PfkB family. Deoxyribokinase subfamily. In terms of assembly, homodimer. The cofactor is Mg(2+).

Its subcellular location is the cytoplasm. The catalysed reaction is 2-deoxy-D-ribose + ATP = 2-deoxy-D-ribose 5-phosphate + ADP + H(+). Its function is as follows. Catalyzes the ATP-dependent phosphorylation of 2-deoxy-D-ribose to 2-deoxy-D-ribose 5-phosphate (dRib-5P), allowing the use of deoxyribose as the sole carbon source. Can also use D-ribose, with much lower efficiency. The sequence is that of Deoxyribokinase from Salmonella typhi.